Here is a 339-residue protein sequence, read N- to C-terminus: Cathepsin L-like peptidase (339 aa).

A signal peptide spans 1-16 (MKILILLVAFVAAANA). A propeptide spans 17–121 (VSLYELVKEE…VTFIEPANVE (105 aa)) (activation peptide). N-linked (GlcNAc...) asparagine glycosylation occurs at N95. Cystine bridges form between C143–C186, C177–C219, and C278–C328. C146 is a catalytic residue. Catalysis depends on residues H285 and N306.

The protein belongs to the peptidase C1 family. In terms of assembly, dimer of a heavy and a light chain linked by disulfide bonds. Interacts with cystatin; the interaction results in inhibition of cathepsin L-like peptidase activity. In terms of tissue distribution, salivary gland. Midgut.

It carries out the reaction Specificity close to that of papain. As compared to cathepsin B, cathepsin L exhibits higher activity toward protein substrates, but has little activity on Z-Arg-Arg-NHMec, and no peptidyl-dipeptidase activity.. Its activity is regulated as follows. More active in the presence of a reducing agent DTT. Functionally, proteinase exhibiting preference for Leu, Val and Phe residues at the P2 position. The protein is Cathepsin L-like peptidase of Aedes aegypti (Yellowfever mosquito).